We begin with the raw amino-acid sequence, 124 residues long: UPF0299 membrane protein VP1300 (124 aa).

4 consecutive transmembrane segments (helical) span residues Leu-9 to Ile-29, Val-35 to Leu-55, Met-72 to Ala-92, and Leu-95 to Leu-115.

This sequence belongs to the UPF0299 family.

Its subcellular location is the cell inner membrane. The protein is UPF0299 membrane protein VP1300 of Vibrio parahaemolyticus serotype O3:K6 (strain RIMD 2210633).